Consider the following 249-residue polypeptide: Undecaprenyl-diphosphatase (249 aa).

Helical transmembrane passes span 11 to 31 (GLTE…TAIF), 35 to 55 (PDVG…VIFV), 74 to 94 (ITLS…GIFF), 101 to 121 (IFSE…FMLL), 135 to 155 (IPYL…LPGI), 175 to 195 (AVKY…VLEM), 208 to 228 (FIVA…MVIA), and 229 to 249 (GKLK…IFYI).

It belongs to the UppP family.

The protein localises to the cell membrane. It carries out the reaction di-trans,octa-cis-undecaprenyl diphosphate + H2O = di-trans,octa-cis-undecaprenyl phosphate + phosphate + H(+). In terms of biological role, catalyzes the dephosphorylation of undecaprenyl diphosphate (UPP). The chain is Undecaprenyl-diphosphatase from Methanococcus vannielii (strain ATCC 35089 / DSM 1224 / JCM 13029 / OCM 148 / SB).